Reading from the N-terminus, the 131-residue chain is Large ribosomal subunit protein bL17 (131 aa).

This sequence belongs to the bacterial ribosomal protein bL17 family. Part of the 50S ribosomal subunit. Contacts protein L32.

The polypeptide is Large ribosomal subunit protein bL17 (Burkholderia ambifaria (strain MC40-6)).